Reading from the N-terminus, the 413-residue chain is Cyclic AMP-dependent transcription factor ATF-7 (413 aa).

The tract at residues 1 to 285 is transactivation domain; the sequence is MGDDRPFVCS…GMVVGTASTM (285 aa). A C2H2-type zinc finger spans residues 7–31; the sequence is FVCSAPGCGQRFTNEDHLAVHKHKH. Thr-51 is modified (phosphothreonine; by MAPK11). Phosphothreonine occurs at positions 53 and 101. 2 disordered regions span residues 81–140 and 299–337; these read ASDD…TTKP and HPDA…RRQR. Lys-107 is covalently cross-linked (Glycyl lysine isopeptide (Lys-Gly) (interchain with G-Cter in SUMO1)). Composition is skewed to low complexity over residues 114–126 and 307–320; these read VDSS…ASSP and QPQV…PSTG. Positions 326–337 are enriched in basic and acidic residues; that stretch reads TVDEDPDERRQR. Positions 332-395 constitute a bZIP domain; sequence DERRQRFLER…AQLKQLLLAH (64 aa). Residues 334–354 are basic motif; it reads RRQRFLERNRAAASRCRQKRK. Residues 360-388 form a leucine-zipper region; it reads LEKKAEELTSQNIQLSNEVTLLRNEVAQL.

The protein belongs to the bZIP family. In terms of assembly, homodimer; binds DNA as homodimer. Heterodimer; heterodimerizes with other members of ATF family and with JUN family members. Interacts with JNK2; the interaction does not phosphorylate ATF7 but acts as a docking site for other ATF-associated partners such as JUN family members. Interacts (via its transactivation domain) with TAF12 the interaction potentiates the transactivation activity and is inhibited by ATF7 sumoylation. Interacts with TAF4; the interaction inhibits the TAF12-dependent transactivation. Interacts with MAPK9; the interaction does not phosphorylate ATF7 but acts as a docking site for ATF7-associated partners such as JUN. Interacts with Ku complex components XRCC6 and XRCC7. Interacts with TERT. In terms of processing, on EGF stimulation, phosphorylated first on Thr-53 allowing subsequent phosphorylation on Thr-51. This latter phosphorylation prevents sumoylation, increases binding to TAF12 and enhances transcriptional activity. Social isolation stress as well as TNF-alpha also induce the phosphorylation of ATF7. Phosphorylated in proliferating colonic and small intestinal epithelial cells. Sumoylation delays nuclear localization and inhibits transactivation activity through preventing binding to TAF12. RANBP2 appears to be the specific E3 ligase.

The protein localises to the nucleus. Its subcellular location is the nucleoplasm. It localises to the chromosome. It is found in the telomere. Functionally, stress-responsive chromatin regulator that plays a role in various biological processes including innate immunological memory, adipocyte differentiation or telomerase regulation. In absence of stress, contributes to the formation of heterochromatin and heterochromatin-like structure by recruiting histone H3K9 tri- and di-methyltransferases thus silencing the transcription of target genes such as Htr5b, STAT1 in adipocytes, or genes involved in innate immunity in macrophages and adipocytes. Phosphorylation of ATF7 disrupts interactions with histone methyltransferase and enhances the association with coactivators containing histone acetyltransferase and/or histone demethylase, leading to disruption of the heterochromatin-like structure and subsequently transcriptional activation. In response to TNF-alpha, which is induced by various stresses, phosphorylated ATF7 and telomerase are released from telomeres leading to telomere shortening. Also plays a role in maintaining epithelial regenerative capacity and protecting against cell death during intestinal epithelial damage and repair. This chain is Cyclic AMP-dependent transcription factor ATF-7 (Atf7), found in Mus musculus (Mouse).